A 602-amino-acid polypeptide reads, in one-letter code: MTDAPVSRIRNFCIIAHIDHGKSTLADRLLQDTGTVANRDMQEQFLDNMELERERGITIKLQAARMNYTAADGEQYVLNLIDTPGHVDFSYEVSRSLLACEGALLVVDASQGVEAQTLANVYLALENDLEIIPVLNKIDLPGADPDRIKEEVEAIIGLDCSNAIYCSAKTGLGVPEILQAVVDRVPAPADAVEEPTKALIFDSYYDPYRGVIVYFRVMSGRISCKDKVLLMASKKTYELDEIGIMAPNERKVEELHAGEVGYLAASIKAVADARVGDTITLFNAPADEELPGYAEAKPMVFCGLFPTEADQYPDLREALHKLQLSDAALKFEPETSSAMGFGFRCGFLGLLHMEIVQERLEREYDLDLIVTAPSVIYNVNMVDGSEELVDNPATLPDPQKRESIEEPYVRMEIFAPNDYNGALMGLCQERRGEYIDMKYITKDRVTLIYELPLAEVVTDFFDQMKTRTQGYASMEYHLIGYRKNQLVRLDVLINGDRADPLTTIVHQDKAYNVGKALVDKLKELIPRQQFKIPLQASIGSRIIASTSISAIRKDVLAKCYGGDISRKKKLLKKQAKGKKRMKAMGKVDVPQEAFMAVLKLND.

In terms of domain architecture, tr-type G spans serine 7–alanine 189. Residues aspartate 19–threonine 24 and asparagine 136–aspartate 139 each bind GTP.

Belongs to the TRAFAC class translation factor GTPase superfamily. Classic translation factor GTPase family. LepA subfamily.

Its subcellular location is the cell inner membrane. The catalysed reaction is GTP + H2O = GDP + phosphate + H(+). Required for accurate and efficient protein synthesis under certain stress conditions. May act as a fidelity factor of the translation reaction, by catalyzing a one-codon backward translocation of tRNAs on improperly translocated ribosomes. Back-translocation proceeds from a post-translocation (POST) complex to a pre-translocation (PRE) complex, thus giving elongation factor G a second chance to translocate the tRNAs correctly. Binds to ribosomes in a GTP-dependent manner. This Synechococcus sp. (strain CC9902) protein is Elongation factor 4.